A 484-amino-acid chain; its full sequence is Ureidoglycolate hydrolase (484 aa).

The first 28 residues, 1–28, serve as a signal peptide directing secretion; sequence MATSAAARFLAALAGAAVLLVLLGGAAG. H148, D159, E194, and H262 together coordinate Mn(2+). 2 substrate regions span residues 193-194 and 262-265; these read EE and HIEQ. The interval 284–399 is involved in dimerization; it reads APASIKVEFE…LSEFKIINQD (116 aa). 3 residues coordinate substrate: H298, N348, and R361. A substrate region spans residues 431-432; it reads YH. H456 contributes to the Mn(2+) binding site. Position 456 (H456) interacts with substrate.

Belongs to the peptidase M20 family. In terms of assembly, homodimer. The cofactor is Mn(2+). Requires Ni(2+) as cofactor. It depends on Co(2+) as a cofactor.

The protein resides in the endoplasmic reticulum. The catalysed reaction is (S)-ureidoglycolate + H2O + 2 H(+) = glyoxylate + 2 NH4(+) + CO2. Its pathway is nitrogen metabolism; (S)-allantoin degradation; glyoxylate from (S)-ureidoglycolate: step 1/1. Involved in the catabolism of purine nucleotides. The sequential activity of AAH, UGLYAH and UAH allows a complete purine breakdown without the intermediate generation of urea. The protein is Ureidoglycolate hydrolase of Oryza sativa subsp. japonica (Rice).